The primary structure comprises 239 residues: Orotidine 5'-phosphate decarboxylase (239 aa).

Substrate contacts are provided by residues Asp-15, Lys-37, 64–73 (DLKFHDIPNT), Thr-126, Arg-187, Gln-196, Gly-216, and Arg-217. Lys-66 functions as the Proton donor in the catalytic mechanism.

It belongs to the OMP decarboxylase family. Type 1 subfamily. As to quaternary structure, homodimer.

It carries out the reaction orotidine 5'-phosphate + H(+) = UMP + CO2. It participates in pyrimidine metabolism; UMP biosynthesis via de novo pathway; UMP from orotate: step 2/2. Its function is as follows. Catalyzes the decarboxylation of orotidine 5'-monophosphate (OMP) to uridine 5'-monophosphate (UMP). This chain is Orotidine 5'-phosphate decarboxylase, found in Geobacter sulfurreducens (strain ATCC 51573 / DSM 12127 / PCA).